The following is a 357-amino-acid chain: tRNA/tmRNA (uracil-C(5))-methyltransferase (357 aa).

Residues glutamine 180, tyrosine 209, asparagine 214, glutamate 230, and aspartate 290 each coordinate S-adenosyl-L-methionine. Cysteine 315 serves as the catalytic Nucleophile. The active-site Proton acceptor is the glutamate 349.

This sequence belongs to the class I-like SAM-binding methyltransferase superfamily. RNA M5U methyltransferase family. TrmA subfamily.

The catalysed reaction is uridine(54) in tRNA + S-adenosyl-L-methionine = 5-methyluridine(54) in tRNA + S-adenosyl-L-homocysteine + H(+). The enzyme catalyses uridine(341) in tmRNA + S-adenosyl-L-methionine = 5-methyluridine(341) in tmRNA + S-adenosyl-L-homocysteine + H(+). In terms of biological role, dual-specificity methyltransferase that catalyzes the formation of 5-methyluridine at position 54 (m5U54) in all tRNAs, and that of position 341 (m5U341) in tmRNA (transfer-mRNA). The polypeptide is tRNA/tmRNA (uracil-C(5))-methyltransferase (Campylobacter jejuni subsp. jejuni serotype O:23/36 (strain 81-176)).